Consider the following 319-residue polypeptide: DNA-directed RNA polymerases II, IV and V subunit 3 (319 aa).

Methionine 1 carries the post-translational modification N-acetylmethionine.

This sequence belongs to the archaeal Rpo3/eukaryotic RPB3 RNA polymerase subunit family. Component of the RNA polymerase II complex consisting of at least 12 subunits. Interacts with SHH1, CLSY1, NRPB11 and NRPD1. Interacts with IYO.

It localises to the nucleus. DNA-dependent RNA polymerase catalyzes the transcription of DNA into RNA using the four ribonucleoside triphosphates as substrates. Component of RNA polymerase II which synthesizes mRNA precursors and many functional non-coding RNAs. Pol II is the central component of the basal RNA polymerase II transcription machinery. It is composed of mobile elements that move relative to each other. NRPB3 is part of the core element with the central large cleft and the clamp element that moves to open and close the cleft. Component of RNA polymerases IV and V which mediate short-interfering RNAs (siRNA) accumulation and subsequent RNA-directed DNA methylation-dependent (RdDM) transcriptional gene silencing (TGS) of endogenous repeated sequences, including transposable elements. The sequence is that of DNA-directed RNA polymerases II, IV and V subunit 3 (NRPB3) from Arabidopsis thaliana (Mouse-ear cress).